Reading from the N-terminus, the 374-residue chain is Carnitine monooxygenase oxygenase subunit (374 aa).

Residues 47 to 155 (WICVAHSSEL…LEEYAGFVFI (109 aa)) form the Rieske domain. Cysteine 89, histidine 91, cysteine 109, and histidine 112 together coordinate [2Fe-2S] cluster. The Fe cation site is built by histidine 211, histidine 216, and aspartate 325.

This sequence belongs to the bacterial ring-hydroxylating dioxygenase alpha subunit family. CntA subfamily. Composed of an oxygenase subunit and a reductase subunit. It depends on [2Fe-2S] cluster as a cofactor. Requires Fe cation as cofactor.

It carries out the reaction (R)-carnitine + NADH + O2 + H(+) = (3R)-3-hydroxy-4-oxobutanoate + trimethylamine + NAD(+) + H2O. The catalysed reaction is (R)-carnitine + NADPH + O2 + H(+) = (3R)-3-hydroxy-4-oxobutanoate + trimethylamine + NADP(+) + H2O. It functions in the pathway amine and polyamine metabolism; carnitine metabolism. In terms of biological role, converts carnitine to trimethylamine and malic semialdehyde. The protein is Carnitine monooxygenase oxygenase subunit (yeaW) of Escherichia coli O157:H7.